The chain runs to 228 residues: 7-cyano-7-deazaguanine synthase (228 aa).

Residue 8–18 (LSGGMDSATTL) coordinates ATP. Residues Cys-188, Cys-198, Cys-201, and Cys-204 each contribute to the Zn(2+) site.

It belongs to the QueC family. The cofactor is Zn(2+).

The catalysed reaction is 7-carboxy-7-deazaguanine + NH4(+) + ATP = 7-cyano-7-deazaguanine + ADP + phosphate + H2O + H(+). The protein operates within purine metabolism; 7-cyano-7-deazaguanine biosynthesis. Catalyzes the ATP-dependent conversion of 7-carboxy-7-deazaguanine (CDG) to 7-cyano-7-deazaguanine (preQ(0)). This chain is 7-cyano-7-deazaguanine synthase, found in Nitrosomonas europaea (strain ATCC 19718 / CIP 103999 / KCTC 2705 / NBRC 14298).